Reading from the N-terminus, the 66-residue chain is Ocellatin-PT2 (66 aa).

The N-terminal stretch at 1–22 (MAFLKKSLFLVLFLGLVSLSIC) is a signal peptide. The propeptide occupies 23 to 39 (DEEKRQDEDDDDDDDEE). The residue at position 66 (Val-66) is a Valine amide.

In terms of tissue distribution, expressed by the skin glands.

Its subcellular location is the secreted. Functionally, has no antibacterial activity against Gram-negative bacteria E.coli ATCC 25922, S.pneumoniae ATCC 700603 and S.choleraesuis ATCC 14028 or against Gram-positive bacterium S.aureus ATCC 29313. Shows no hemolytic activity and no cytotoxicity. In Leptodactylus pustulatus (Ceara white-lipped frog), this protein is Ocellatin-PT2.